Reading from the N-terminus, the 260-residue chain is Pyridoxine 5'-phosphate synthase (260 aa).

N6 contributes to the 3-amino-2-oxopropyl phosphate binding site. Position 8–9 (8–9 (DH)) interacts with 1-deoxy-D-xylulose 5-phosphate. R17 contacts 3-amino-2-oxopropyl phosphate. The active-site Proton acceptor is the H42. 1-deoxy-D-xylulose 5-phosphate-binding residues include R44 and H49. E69 serves as the catalytic Proton acceptor. Position 99 (T99) interacts with 1-deoxy-D-xylulose 5-phosphate. H213 (proton donor) is an active-site residue. 3-amino-2-oxopropyl phosphate-binding positions include G214 and 235–236 (GQ).

This sequence belongs to the PNP synthase family. Homooctamer; tetramer of dimers.

It localises to the cytoplasm. It carries out the reaction 3-amino-2-oxopropyl phosphate + 1-deoxy-D-xylulose 5-phosphate = pyridoxine 5'-phosphate + phosphate + 2 H2O + H(+). It participates in cofactor biosynthesis; pyridoxine 5'-phosphate biosynthesis; pyridoxine 5'-phosphate from D-erythrose 4-phosphate: step 5/5. Its function is as follows. Catalyzes the complicated ring closure reaction between the two acyclic compounds 1-deoxy-D-xylulose-5-phosphate (DXP) and 3-amino-2-oxopropyl phosphate (1-amino-acetone-3-phosphate or AAP) to form pyridoxine 5'-phosphate (PNP) and inorganic phosphate. This is Pyridoxine 5'-phosphate synthase from Sulfurimonas denitrificans (strain ATCC 33889 / DSM 1251) (Thiomicrospira denitrificans (strain ATCC 33889 / DSM 1251)).